The following is a 208-amino-acid chain: Putative chemokine-related protein FP248 (208 aa).

An N-terminal signal peptide occupies residues 1–23; sequence MGTGGSLLCGCSLVLSCLCPSAS. The N-linked (GlcNAc...) asparagine glycan is linked to Asn-29.

The protein resides in the secreted. This chain is Putative chemokine-related protein FP248, found in Homo sapiens (Human).